Here is a 537-residue protein sequence, read N- to C-terminus: Organic anion transporter 3 (537 aa).

Over Met-1–Gly-11 the chain is Cytoplasmic. Position 4 is a phosphoserine (Ser-4). Residues Ser-12–Ala-32 form a helical membrane-spanning segment. Topologically, residues Asn-33–Glu-123 are extracellular. Asn-81 carries N-linked (GlcNAc...) asparagine glycosylation. The chain crosses the membrane as a helical span at residues Met-124–Ser-144. At Asp-145 to Lys-150 the chain is on the cytoplasmic side. Residues Pro-151–Pro-171 traverse the membrane as a helical segment. Topologically, residues Ser-172–Tyr-176 are extracellular. A helical membrane pass occupies residues Met-177–Leu-197. The Cytoplasmic segment spans residues Asn-198 to Thr-212. Residues Thr-213 to Pro-233 traverse the membrane as a helical segment. Residues Gln-234–Arg-236 lie on the Extracellular side of the membrane. Residues Trp-237–Pro-257 traverse the membrane as a helical segment. At Glu-258–Thr-327 the chain is on the cytoplasmic side. Residues Phe-328–Val-348 form a helical membrane-spanning segment. The Extracellular segment spans residues Glu-349–Asn-354. A helical membrane pass occupies residues Ile-355–Leu-375. At Ser-376–Arg-383 the chain is on the cytoplasmic side. A helical membrane pass occupies residues Ile-384–Ser-404. At Ser-405–Arg-411 the chain is on the extracellular side. A helical transmembrane segment spans residues Thr-412 to Tyr-432. Over Thr-433 to Pro-471 the chain is Cytoplasmic. Residues Phe-472–Leu-492 form a helical membrane-spanning segment. At Leu-493–Pro-537 the chain is on the extracellular side. The disordered stretch occupies residues Gln-513–Pro-537.

It belongs to the major facilitator (TC 2.A.1) superfamily. Organic cation transporter (TC 2.A.1.19) family. As to expression, expressed mainly in kidney. In kidney, detected in almost all parts of the nephron, including macula densa cells. Expressed (at protein level) throughout the renal cortex. Widely distributed in the brain with no large regional differences. Expressed in the choroid plexus (CP, located in the ventricles of the brain). Expressed in developing bone. Weakly expressed in brain and eye.

Its subcellular location is the basolateral cell membrane. The catalysed reaction is estrone 3-sulfate(out) + glutarate(in) = estrone 3-sulfate(in) + glutarate(out). The enzyme catalyses estrone 3-sulfate(in) + 2-oxoglutarate(out) = estrone 3-sulfate(out) + 2-oxoglutarate(in). It carries out the reaction taurocholate(out) + glutarate(in) = taurocholate(in) + glutarate(out). It catalyses the reaction dehydroepiandrosterone 3-sulfate(out) + glutarate(in) = dehydroepiandrosterone 3-sulfate(in) + glutarate(out). The catalysed reaction is glutarate(in) + 2-oxoglutarate(out) = glutarate(out) + 2-oxoglutarate(in). The enzyme catalyses urate(in) + 2-oxoglutarate(out) = urate(out) + 2-oxoglutarate(in). It carries out the reaction prostaglandin F2alpha(out) + glutarate(in) = prostaglandin F2alpha(in) + glutarate(out). It catalyses the reaction prostaglandin F2alpha(out) + 2-oxoglutarate(in) = prostaglandin F2alpha(in) + 2-oxoglutarate(out). The catalysed reaction is (R)-carnitine(out) + 2-oxoglutarate(in) = (R)-carnitine(in) + 2-oxoglutarate(out). The enzyme catalyses glutarate(in) + (R)-carnitine(out) = glutarate(out) + (R)-carnitine(in). It carries out the reaction prostaglandin E2(out) + 2-oxoglutarate(in) = prostaglandin E2(in) + 2-oxoglutarate(out). It catalyses the reaction prostaglandin E2(out) + glutarate(in) = prostaglandin E2(in) + glutarate(out). The catalysed reaction is urate(in) + glutarate(out) = urate(out) + glutarate(in). The enzyme catalyses taurocholate(out) + 2-oxoglutarate(in) = taurocholate(in) + 2-oxoglutarate(out). It carries out the reaction dehydroepiandrosterone 3-sulfate(out) + 2-oxoglutarate(in) = dehydroepiandrosterone 3-sulfate(in) + 2-oxoglutarate(out). It catalyses the reaction kynurenate(out) + a dicarboxylate(in) = kynurenate(in) + a dicarboxylate(out). The catalysed reaction is (indol-3-yl)acetate(out) + a dicarboxylate(in) = (indol-3-yl)acetate(in) + a dicarboxylate(out). The enzyme catalyses indoxyl sulfate(out) + a dicarboxylate(in) = indoxyl sulfate(in) + a dicarboxylate(out). It carries out the reaction N-benzoylglycine(out) + a dicarboxylate(in) = N-benzoylglycine(in) + a dicarboxylate(out). It catalyses the reaction 3-carboxy-4-methyl-5-propyl-2-furanpropanoate(out) + a dicarboxylate(in) = 3-carboxy-4-methyl-5-propyl-2-furanpropanoate(in) + a dicarboxylate(out). The catalysed reaction is (6R)-L-erythro-5,6,7,8-tetrahydrobiopterin(out) + a dicarboxylate(in) = (6R)-L-erythro-5,6,7,8-tetrahydrobiopterin(in) + a dicarboxylate(out). The enzyme catalyses L-erythro-7,8-dihydrobiopterin(out) + a dicarboxylate(in) = L-erythro-7,8-dihydrobiopterin(in) + a dicarboxylate(out). It carries out the reaction L-sepiapterin(out) + a dicarboxylate(in) = L-sepiapterin(in) + a dicarboxylate(out). Expression inhibited by androgens such as testosterone. Its function is as follows. Functions as an organic anion/dicarboxylate exchanger that couples organic anion uptake indirectly to the sodium gradient. Transports organic anions such as estrone 3-sulfate (E1S) and urate in exchange for dicarboxylates such as glutarate or ketoglutarate (2-oxoglutarate). Plays an important role in the excretion of endogenous and exogenous organic anions, especially from the kidney and the brain. E1S transport is pH- and chloride-dependent and may also involve E1S/cGMP exchange. Responsible for the transport of prostaglandin E2 (PGE2) and prostaglandin F2(alpha) (PGF2(alpha)) in the basolateral side of the renal tubule. Involved in the transport of neuroactive tryptophan metabolites kynurenate and xanthurenate. Functions as a biopterin transporters involved in the uptake and the secretion of coenzymes tetrahydrobiopterin (BH4), dihydrobiopterin (BH2) and sepiapterin to urine, thereby determining baseline levels of blood biopterins. May be involved in the basolateral transport of steviol, a metabolite of the popular sugar substitute stevioside. May participate in the detoxification/ renal excretion of drugs and xenobiotics, such as the histamine H(2)-receptor antagonists fexofenadine and cimetidine, the antibiotic benzylpenicillin (PCG), the anionic herbicide 2,4-dichloro-phenoxyacetate (2,4-D), the diagnostic agent p-aminohippurate (PAH), the antiviral acyclovir (ACV), and the mycotoxin ochratoxin (OTA), by transporting these exogenous organic anions across the cell membrane in exchange for dicarboxylates such as 2-oxoglutarate. May contribute to the release of cortisol in the adrenals. Involved in one of the detoxification systems on the choroid plexus (CP), removes substrates such as E1S or taurocholate (TC), PCG, 2,4-D and PAH, from the cerebrospinal fluid (CSF) to the blood for eventual excretion in urine and bile. Also contributes to the uptake of several other organic compounds such as the prostanoids prostaglandin E(2) and prostaglandin F(2-alpha), L-carnitine, and the therapeutic drugs allopurinol, 6-mercaptopurine (6-MP) and 5-fluorouracil (5-FU). Mediates the transport of PAH, PCG, and the statins pravastatin and pitavastatin, from the cerebrum into the blood circulation across the blood-brain barrier (BBB). Contributes to the renal uptake of potent uremic toxins (indoxyl sulfate (IS), indole acetate (IA), hippurate/N-benzoylglycine (HA) and 3-carboxy-4-methyl-5-propyl-2-furanpropionate (CMPF)), pravastatin, PCG, E1S and dehydroepiandrosterone sulfate (DHEAS), and is partly involved in the renal uptake of temocaprilat (an angiotensin-converting enzyme (ACE) inhibitor). In summary, plays a role in the efflux of drugs and xenobiotics, helping reduce their undesired toxicological effects on the body. The protein is Organic anion transporter 3 (Slc22a8) of Mus musculus (Mouse).